A 426-amino-acid polypeptide reads, in one-letter code: Histidine--tRNA ligase (426 aa).

It belongs to the class-II aminoacyl-tRNA synthetase family. In terms of assembly, homodimer.

The protein resides in the cytoplasm. It catalyses the reaction tRNA(His) + L-histidine + ATP = L-histidyl-tRNA(His) + AMP + diphosphate + H(+). This Legionella pneumophila (strain Paris) protein is Histidine--tRNA ligase.